The following is a 132-amino-acid chain: Large-conductance mechanosensitive channel (132 aa).

A run of 3 helical transmembrane segments spans residues 14-34, 39-59, and 68-88; these read VLDMAVGVILGAALKSIVDSL, INPIISLFVGQVDLSGIAVTI, and IGNFLNDVINFLIIAIIVFLI.

This sequence belongs to the MscL family. In terms of assembly, homopentamer.

The protein localises to the cell membrane. In terms of biological role, channel that opens in response to stretch forces in the membrane lipid bilayer. May participate in the regulation of osmotic pressure changes within the cell. This chain is Large-conductance mechanosensitive channel, found in Latilactobacillus sakei subsp. sakei (strain 23K) (Lactobacillus sakei subsp. sakei).